The sequence spans 72 residues: MKNSESLKEFKKLNSDQITEKIGQLRKDLFELRFKQATRQLNETHKFKIIKKQVAQLLTLSKTQSASKTTSD.

This sequence belongs to the universal ribosomal protein uL29 family.

The sequence is that of Large ribosomal subunit protein uL29 from Prochlorococcus marinus (strain MIT 9301).